The sequence spans 1696 residues: Proprotein convertase subtilisin/kexin type 5 (1696 aa).

The first 25 residues, 1-25 (MPPAIVILALFTAALCAVNLRTVAA), serve as a signal peptide directing secretion. The propeptide occupies 26–110 (DGPRIYRNEW…QQVVKRRVKR (85 aa)). Residues 111 to 488 (RVKRVYSMYP…GLMDAGKMVE (378 aa)) form a catalytic region. At 111 to 1618 (RVKRVYSMYP…ADSIPTNVAY (1508 aa)) the chain is on the extracellular side. The Peptidase S8 domain occupies 167 to 487 (QWSDMNVEAA…FGLMDAGKMV (321 aa)). Active-site charge relay system residues include D192 and H233. N246 is a glycosylation site (N-linked (GlcNAc...) asparagine). S407 acts as the Charge relay system in catalysis. The 144-residue stretch at 495–638 (RVPEQHVCEE…KLILYGTAEH (144 aa)) folds into the P/Homo B domain. The N-linked (GlcNAc...) asparagine glycan is linked to N529. A compositionally biased stretch (basic and acidic residues) spans 643–657 (RDEESRPHTPQTREE). The disordered stretch occupies residues 643–666 (RDEESRPHTPQTREEPTDEEECED). The interval 664 to 1649 (CEDGDYYDRS…LQARSNGRLC (986 aa)) is CRM (Cys-rich motif). N885 is a glycosylation site (N-linked (GlcNAc...) asparagine). The helical transmembrane segment at 1619 to 1639 (IAVATFICVVIVVLFFVVFGM) threads the bilayer. At 1640–1696 (LQARSNGRLCWAHKYQQVPTTRYEKMNDHVNILSQEDFYNEDSLSEDEIHSIDSTRH) the chain is on the cytoplasmic side.

This sequence belongs to the peptidase S8 family.

It is found in the secreted. Its subcellular location is the cell membrane. Serine endoprotease that processes various proproteins by cleavage at paired basic amino acids, recognizing the RXXX[KR]R consensus motif. Likely functions in the constitutive and regulated secretory pathways. The protein is Proprotein convertase subtilisin/kexin type 5 (PC6) of Branchiostoma californiense (California lancelet).